We begin with the raw amino-acid sequence, 166 residues long: 6,7-dimethyl-8-ribityllumazine synthase (166 aa).

5-amino-6-(D-ribitylamino)uracil is bound by residues F24, 58 to 60 (ALE), and 82 to 84 (AVI). A (2S)-2-hydroxy-3-oxobutyl phosphate-binding site is contributed by 87 to 88 (ET). The active-site Proton donor is the H90. N115 is a 5-amino-6-(D-ribitylamino)uracil binding site. R129 provides a ligand contact to (2S)-2-hydroxy-3-oxobutyl phosphate.

Belongs to the DMRL synthase family.

It carries out the reaction (2S)-2-hydroxy-3-oxobutyl phosphate + 5-amino-6-(D-ribitylamino)uracil = 6,7-dimethyl-8-(1-D-ribityl)lumazine + phosphate + 2 H2O + H(+). It functions in the pathway cofactor biosynthesis; riboflavin biosynthesis; riboflavin from 2-hydroxy-3-oxobutyl phosphate and 5-amino-6-(D-ribitylamino)uracil: step 1/2. In terms of biological role, catalyzes the formation of 6,7-dimethyl-8-ribityllumazine by condensation of 5-amino-6-(D-ribitylamino)uracil with 3,4-dihydroxy-2-butanone 4-phosphate. This is the penultimate step in the biosynthesis of riboflavin. The polypeptide is 6,7-dimethyl-8-ribityllumazine synthase (Ralstonia pickettii (strain 12J)).